The chain runs to 372 residues: GTPase Obg (372 aa).

The region spanning 1–159 is the Obg domain; sequence MKFIDEARIE…RMLKLELKVL (159 aa). Residues 128 to 147 are disordered; the sequence is LHFKSSTNRAPRQKTDGKPG. Positions 160-334 constitute an OBG-type G domain; the sequence is ADVGLLGMPN…LVYAIHDYLV (175 aa). GTP is bound by residues 166-173, 191-195, 213-216, 284-287, and 315-317; these read GMPNAGKS, FTTLA, DIPG, NKLD, and SAL. Positions 173 and 193 each coordinate Mg(2+).

The protein belongs to the TRAFAC class OBG-HflX-like GTPase superfamily. OBG GTPase family. In terms of assembly, monomer. Mg(2+) is required as a cofactor.

It localises to the cytoplasm. An essential GTPase which binds GTP, GDP and possibly (p)ppGpp with moderate affinity, with high nucleotide exchange rates and a fairly low GTP hydrolysis rate. Plays a role in control of the cell cycle, stress response, ribosome biogenesis and in those bacteria that undergo differentiation, in morphogenesis control. The protein is GTPase Obg of Burkholderia pseudomallei (strain 668).